We begin with the raw amino-acid sequence, 236 residues long: C-&gt;U-editing enzyme APOBEC-1 (236 aa).

One can recognise a CMP/dCMP-type deaminase domain in the interval 10-134 (KDYTLRRRIE…RRNRQGLKDL (125 aa)). Residue His-61 coordinates Zn(2+). Glu-63 functions as the Proton donor in the catalytic mechanism. Zn(2+)-binding residues include Cys-93 and Cys-96.

It belongs to the cytidine and deoxycytidylate deaminase family. In terms of assembly, homodimer. Interacts with A1CF; form an mRNA editing complex. Interacts with RBM47; form an mRNA editing complex. Found in a complex with CELF2/CUGBP2 and A1CF. Interacts with HNRPAB. Interacts with SYNCRIP. Requires Zn(2+) as cofactor. Expressed exclusively in the intestine.

Its subcellular location is the cytoplasm. It is found in the nucleus. It catalyses the reaction a cytidine in mRNA + H2O + H(+) = a uridine in mRNA + NH4(+). The enzyme catalyses cytidine(6666) in apoB mRNA + H2O + H(+) = uridine(6666) in apoB mRNA + NH4(+). Its function is as follows. Cytidine deaminase catalyzing the cytidine to uridine postranscriptional editing of a variety of mRNAs. Form complexes with cofactors that confer differential editing activity and selectivity. Responsible for the postranscriptional editing of a CAA codon for Gln to a UAA codon for stop in the apolipoprotein B mRNA. Also involved in CGA (Arg) to UGA (Stop) editing in the NF1 mRNA. May also play a role in the epigenetic regulation of gene expression by participating in DNA demethylation. The sequence is that of C-&gt;U-editing enzyme APOBEC-1 from Oryctolagus cuniculus (Rabbit).